A 160-amino-acid polypeptide reads, in one-letter code: Cytochrome b6-f complex subunit 4 (160 aa).

3 helical membrane passes run Leu-36–Val-56, Leu-95–Glu-115, and Ile-128–Cys-148.

The protein belongs to the cytochrome b family. PetD subfamily. The 4 large subunits of the cytochrome b6-f complex are cytochrome b6, subunit IV (17 kDa polypeptide, PetD), cytochrome f and the Rieske protein, while the 4 small subunits are PetG, PetL, PetM and PetN. The complex functions as a dimer.

It is found in the cellular thylakoid membrane. Functionally, component of the cytochrome b6-f complex, which mediates electron transfer between photosystem II (PSII) and photosystem I (PSI), cyclic electron flow around PSI, and state transitions. The polypeptide is Cytochrome b6-f complex subunit 4 (Prochlorococcus marinus (strain MIT 9313)).